The following is a 722-amino-acid chain: Cellulose synthase-like protein G2 (722 aa).

Helical transmembrane passes span 25–45 (IYAV…VHSI) and 51–71 (TLIT…WATT). Residues Asp139 and Asp437 contribute to the active site. A run of 6 helical transmembrane segments spans residues 514-534 (FWPF…VALI), 548-568 (FWLY…DFLL), 583-605 (WMVR…TLNL), 635-655 (PSSS…LAFM), 660-680 (GIFT…FAVV), and 702-722 (ICFL…FFLK).

This sequence belongs to the glycosyltransferase 2 family. Plant cellulose synthase-like G subfamily. Expressed in young seedlings, primarily in the vascular tissue.

It is found in the golgi apparatus membrane. Its function is as follows. Thought to be a Golgi-localized beta-glycan synthase that polymerize the backbones of noncellulosic polysaccharides (hemicelluloses) of plant cell wall. This is Cellulose synthase-like protein G2 (CSLG2) from Arabidopsis thaliana (Mouse-ear cress).